Consider the following 193-residue polypeptide: Putative histone H2B type 2-C (193 aa).

Over residues 1-12 the composition is skewed to low complexity; that stretch reads MPEPAKFAPAPK. The interval 1 to 33 is disordered; that stretch reads MPEPAKFAPAPKKGSKKAVTKAQKKDGKKRKRS. At Pro-2 the chain carries N-acetylproline. Lys-6 carries the post-translational modification N6-(2-hydroxyisobutyryl)lysine; alternate. An N6-(beta-hydroxybutyryl)lysine; alternate mark is found at Lys-6 and Lys-12. 3 positions are modified to N6-acetyllysine; alternate: Lys-6, Lys-12, and Lys-13. Lys-6 carries the N6-butyryllysine; alternate modification. N6-crotonyllysine; alternate occurs at positions 6, 12, and 13. N6-lactoyllysine; alternate is present on residues Lys-6 and Lys-12. Residue Lys-6 forms a Glycyl lysine isopeptide (Lys-Gly) (interchain with G-Cter in SUMO2); alternate linkage. Residue Lys-13 is modified to N6-(2-hydroxyisobutyryl)lysine; alternate. Ser-15 bears the Phosphoserine; by STK4/MST1 mark. Residues Lys-16, Lys-17, Lys-21, and Lys-24 each carry the N6-acetyllysine; alternate modification. N6-crotonyllysine; alternate occurs at positions 16, 17, 21, and 24. An N6-lactoyllysine; alternate mark is found at Lys-16, Lys-17, Lys-21, and Lys-24. Lys-17 and Lys-21 each carry N6-(beta-hydroxybutyryl)lysine; alternate. Lys-17 carries the post-translational modification N6-glutaryllysine; alternate. N6-(2-hydroxyisobutyryl)lysine; alternate is present on residues Lys-21 and Lys-24. The residue at position 21 (Lys-21) is an N6-butyryllysine; alternate. Lys-21 participates in a covalent cross-link: Glycyl lysine isopeptide (Lys-Gly) (interchain with G-Cter in SUMO2); alternate. Position 25 is an N6-(2-hydroxyisobutyryl)lysine (Lys-25). The residue at position 35 (Lys-35) is an N6-(2-hydroxyisobutyryl)lysine; alternate. N6-(beta-hydroxybutyryl)lysine; alternate is present on Lys-35. Lys-35 is modified (N6-crotonyllysine; alternate). Residue Lys-35 is modified to N6-glutaryllysine; alternate. Lys-35 bears the N6-succinyllysine; alternate mark. A Glycyl lysine isopeptide (Lys-Gly) (interchain with G-Cter in ubiquitin); alternate cross-link involves residue Lys-35. Ser-37 carries the phosphoserine; by AMPK modification. 3 positions are modified to N6-(2-hydroxyisobutyryl)lysine; alternate: Lys-44, Lys-47, and Lys-58. Lys-44 is modified (N6-lactoyllysine; alternate). N6-glutaryllysine; alternate occurs at positions 44 and 47. Lys-47 carries the post-translational modification N6-methyllysine; alternate. Lys-58 is subject to N6,N6-dimethyllysine; alternate. Position 80 is a dimethylated arginine (Arg-80). Lys-86 is modified (N6-(2-hydroxyisobutyryl)lysine; alternate). An N6-(beta-hydroxybutyryl)lysine; alternate modification is found at Lys-86. Lys-86 carries the N6-acetyllysine; alternate modification. Lys-86 carries the N6-lactoyllysine; alternate modification. Position 86 is an N6,N6,N6-trimethyllysine; alternate (Lys-86). Omega-N-methylarginine is present on residues Arg-87 and Arg-93. The disordered stretch occupies residues 111–136; it reads PCPRAPRRSPSTPAPSESLPGPGARS.

The protein belongs to the histone H2B family. The nucleosome is a histone octamer containing two molecules each of H2A, H2B, H3 and H4 assembled in one H3-H4 heterotetramer and two H2A-H2B heterodimers. The octamer wraps approximately 147 bp of DNA. Phosphorylation at Ser-37 (H2BS36ph) by AMPK in response to stress promotes transcription. Phosphorylated on Ser-15 (H2BS14ph) by STK4/MST1 during apoptosis; which facilitates apoptotic chromatin condensation. Also phosphorylated on Ser-15 in response to DNA double strand breaks (DSBs), and in correlation with somatic hypermutation and immunoglobulin class-switch recombination. In terms of processing, crotonylation (Kcr) is specifically present in male germ cells and marks testis-specific genes in post-meiotic cells, including X-linked genes that escape sex chromosome inactivation in haploid cells. Crotonylation marks active promoters and enhancers and confers resistance to transcriptional repressors. It is also associated with post-meiotically activated genes on autosomes. Post-translationally, lactylated in macrophages by EP300/P300 by using lactoyl-CoA directly derived from endogenous or exogenous lactate, leading to stimulates gene transcription.

The protein resides in the nucleus. The protein localises to the chromosome. In terms of biological role, core component of nucleosome. Nucleosomes wrap and compact DNA into chromatin, limiting DNA accessibility to the cellular machineries which require DNA as a template. Histones thereby play a central role in transcription regulation, DNA repair, DNA replication and chromosomal stability. DNA accessibility is regulated via a complex set of post-translational modifications of histones, also called histone code, and nucleosome remodeling. The chain is Putative histone H2B type 2-C from Homo sapiens (Human).